Consider the following 91-residue polypeptide: Elongation factor 1-beta (91 aa).

This sequence belongs to the EF-1-beta/EF-1-delta family.

Functionally, promotes the exchange of GDP for GTP in EF-1-alpha/GDP, thus allowing the regeneration of EF-1-alpha/GTP that could then be used to form the ternary complex EF-1-alpha/GTP/AAtRNA. This is Elongation factor 1-beta from Pyrococcus furiosus (strain ATCC 43587 / DSM 3638 / JCM 8422 / Vc1).